The primary structure comprises 445 residues: tRNA-2-methylthio-N(6)-dimethylallyladenosine synthase (445 aa).

The MTTase N-terminal domain occupies 3–124 (KKLYIKTYGC…LPELISKVVR (122 aa)). [4Fe-4S] cluster is bound by residues C12, C48, C87, C162, C166, and C169. Residues 148–380 (YPQGTSAFIS…QQELMAQQLA (233 aa)) form the Radical SAM core domain. The TRAM domain occupies 383–445 (TSCVGSTMKV…SLNSLTGEIL (63 aa)).

This sequence belongs to the methylthiotransferase family. MiaB subfamily. As to quaternary structure, monomer. The cofactor is [4Fe-4S] cluster.

The protein resides in the cytoplasm. It catalyses the reaction N(6)-dimethylallyladenosine(37) in tRNA + (sulfur carrier)-SH + AH2 + 2 S-adenosyl-L-methionine = 2-methylsulfanyl-N(6)-dimethylallyladenosine(37) in tRNA + (sulfur carrier)-H + 5'-deoxyadenosine + L-methionine + A + S-adenosyl-L-homocysteine + 2 H(+). In terms of biological role, catalyzes the methylthiolation of N6-(dimethylallyl)adenosine (i(6)A), leading to the formation of 2-methylthio-N6-(dimethylallyl)adenosine (ms(2)i(6)A) at position 37 in tRNAs that read codons beginning with uridine. This chain is tRNA-2-methylthio-N(6)-dimethylallyladenosine synthase, found in Rickettsia conorii (strain ATCC VR-613 / Malish 7).